A 297-amino-acid chain; its full sequence is MRDETGETQDLEAEEIHPLFHGAPGSTEFRKLRKRLVRETRAAIETYDMIRPGDRWLVCLSGGKDSYTLLAVLHELKWRGLLPVELLACNLDQGQPGFPATVLPEFLTQRQVPHRIEYQDTYSIVKEKVPEGRTYCSLCSRLRRGNLYRIAREEGCQAVVLGHHRDDILETFFMNLFHGGRLASMPPKLLNEEGDLNVLRPLAFVAEADCDRFARAMNYPVIPCDLCGSQEGLQRMQVKRLLDEWESRSPGRRRVMFRALMNVRPSHLPDPKLFDFTALMPDMSDFREKDVPILREH.

Residues 61 to 66 carry the PP-loop motif motif; it reads SGGKDS. [4Fe-4S] cluster contacts are provided by cysteine 136, cysteine 139, and cysteine 227.

This sequence belongs to the TtcA family. In terms of assembly, homodimer. Requires Mg(2+) as cofactor. It depends on [4Fe-4S] cluster as a cofactor.

Its subcellular location is the cytoplasm. The catalysed reaction is cytidine(32) in tRNA + S-sulfanyl-L-cysteinyl-[cysteine desulfurase] + AH2 + ATP = 2-thiocytidine(32) in tRNA + L-cysteinyl-[cysteine desulfurase] + A + AMP + diphosphate + H(+). It participates in tRNA modification. Catalyzes the ATP-dependent 2-thiolation of cytidine in position 32 of tRNA, to form 2-thiocytidine (s(2)C32). The sulfur atoms are provided by the cysteine/cysteine desulfurase (IscS) system. This chain is tRNA-cytidine(32) 2-sulfurtransferase, found in Paracoccus denitrificans (strain Pd 1222).